The chain runs to 118 residues: Ribosome-binding factor A (118 aa).

It belongs to the RbfA family. Monomer. Binds 30S ribosomal subunits, but not 50S ribosomal subunits or 70S ribosomes.

It is found in the cytoplasm. One of several proteins that assist in the late maturation steps of the functional core of the 30S ribosomal subunit. Associates with free 30S ribosomal subunits (but not with 30S subunits that are part of 70S ribosomes or polysomes). Required for efficient processing of 16S rRNA. May interact with the 5'-terminal helix region of 16S rRNA. This chain is Ribosome-binding factor A, found in Bacillus cereus (strain ATCC 10987 / NRS 248).